Consider the following 174-residue polypeptide: tRNA (cytidine(56)-2'-O)-methyltransferase (174 aa).

Residues Leu83, 108–112 (GAEKV), and 126–133 (VGNQPHSE) contribute to the S-adenosyl-L-methionine site.

The protein belongs to the aTrm56 family. Homodimer.

The protein localises to the cytoplasm. The catalysed reaction is cytidine(56) in tRNA + S-adenosyl-L-methionine = 2'-O-methylcytidine(56) in tRNA + S-adenosyl-L-homocysteine + H(+). Its function is as follows. Specifically catalyzes the AdoMet-dependent 2'-O-ribose methylation of cytidine at position 56 in tRNAs. This chain is tRNA (cytidine(56)-2'-O)-methyltransferase, found in Methanothrix thermoacetophila (strain DSM 6194 / JCM 14653 / NBRC 101360 / PT) (Methanosaeta thermophila).